Reading from the N-terminus, the 450-residue chain is 3-keto-steroid reductase erg27 (450 aa).

Residues L25, T53, and K59 each coordinate NADP(+). Catalysis depends on proton donor residues S215 and Y238. NADP(+) is bound by residues Y238, K242, and T296. Residue K242 is the Lowers pKa of active site Tyr of the active site.

This sequence belongs to the short-chain dehydrogenases/reductases (SDR) family. ERG27 subfamily. In terms of assembly, heterotetramer of erg25, erg26, erg27 and erg28. Erg28 acts as a scaffold to tether erg27 and other 4,4-demethylation-related enzymes, forming a demethylation enzyme complex, in the endoplasmic reticulum.

Its subcellular location is the endoplasmic reticulum membrane. The protein localises to the lipid droplet. It participates in steroid metabolism; ergosterol biosynthesis. Sterol-C4-methyl oxidase; part of the third module of ergosterol biosynthesis pathway that includes the late steps of the pathway. Erg27 is a catalytic component of the C-4 demethylation complex that catalyzes the conversion of 4,4-dimethylfecosterol into fecosterol via 4-methylfecosterol. The third module or late pathway involves the ergosterol synthesis itself through consecutive reactions that mainly occur in the endoplasmic reticulum (ER) membrane. Firstly, the squalene synthase erg9 catalyzes the condensation of 2 farnesyl pyrophosphate moieties to form squalene, which is the precursor of all steroids. Squalene synthase is crucial for balancing the incorporation of farnesyl diphosphate (FPP) into sterol and nonsterol isoprene synthesis. Secondly, squalene is converted into lanosterol by the consecutive action of the squalene epoxidase erg1 and the lanosterol synthase erg7. Then, the delta(24)-sterol C-methyltransferase erg6 methylates lanosterol at C-24 to produce eburicol. Eburicol is the substrate of the sterol 14-alpha demethylase encoded by cyp51A and cyp51B, to yield 4,4,24-trimethyl ergosta-8,14,24(28)-trienol. The C-14 reductase erg24 then reduces the C14=C15 double bond which leads to 4,4-dimethylfecosterol. A sequence of further demethylations at C-4, involving the C-4 demethylation complex containing the C-4 methylsterol oxidases erg25A or erg25B, the sterol-4-alpha-carboxylate 3-dehydrogenase erg26 and the 3-keto-steroid reductase erg27, leads to the production of fecosterol via 4-methylfecosterol. The C-8 sterol isomerase erg2 then catalyzes the reaction which results in unsaturation at C-7 in the B ring of sterols and thus converts fecosterol to episterol. The sterol-C5-desaturase erg3B then catalyzes the introduction of a C-5 double bond in the B ring to produce 5-dehydroepisterol. The 2 other sterol-C5-desaturases, erg3A and erg3C, seem to be less important in ergosterol biosynthesis. The C-22 sterol desaturase erg5 further converts 5-dehydroepisterol into ergosta-5,7,22,24(28)-tetraen-3beta-ol by forming the C-22(23) double bond in the sterol side chain. Finally, ergosta-5,7,22,24(28)-tetraen-3beta-ol is substrate of the C-24(28) sterol reductases erg4A and erg4B to produce ergosterol. Possible alternative sterol biosynthetic pathways might exist from fecosterol to ergosterol, depending on the activities of the erg3 isoforms. This Aspergillus fumigatus (strain ATCC MYA-4609 / CBS 101355 / FGSC A1100 / Af293) (Neosartorya fumigata) protein is 3-keto-steroid reductase erg27.